Reading from the N-terminus, the 142-residue chain is Galactose-6-phosphate isomerase subunit LacA 2 (142 aa).

Belongs to the LacAB/RpiB family. Heteromultimeric protein consisting of LacA and LacB.

It carries out the reaction aldehydo-D-galactose 6-phosphate = keto-D-tagatose 6-phosphate. It functions in the pathway carbohydrate metabolism; D-galactose 6-phosphate degradation; D-tagatose 6-phosphate from D-galactose 6-phosphate: step 1/1. The chain is Galactose-6-phosphate isomerase subunit LacA 2 from Streptococcus pyogenes serotype M3 (strain ATCC BAA-595 / MGAS315).